The sequence spans 217 residues: Somatotropin (217 aa).

An N-terminal signal peptide occupies residues 1–26 (MAPGSRTSLLLAFGLLCLPWLQEGSA). A Zn(2+)-binding site is contributed by His-44. Cys-79 and Cys-191 are oxidised to a cystine. Residue Ser-132 is modified to Phosphoserine. Glu-200 lines the Zn(2+) pocket. A disulfide bridge links Cys-208 with Cys-215.

The protein belongs to the somatotropin/prolactin family.

It is found in the secreted. Functionally, plays an important role in growth control. Its major role in stimulating body growth is to stimulate the liver and other tissues to secrete IGF1. It stimulates both the differentiation and proliferation of myoblasts. It also stimulates amino acid uptake and protein synthesis in muscle and other tissues. The sequence is that of Somatotropin (GH1) from Pan troglodytes (Chimpanzee).